The primary structure comprises 354 residues: Homer protein homolog 1 (354 aa).

The WH1 domain maps to 1-110 (MGEQPIFSTR…EKFQEFKEAA (110 aa)). At Gly-2 the chain carries N-acetylglycine. A disordered region spans residues 114-172 (KEKSQEKMELTSTPSQESAGGDLQSPLTPESINGTDDERTPDLTQNSEPRPEPTQNALP). 2 stretches are compositionally biased toward polar residues: residues 138–147 (SPLTPESING) and 155–172 (DLTQ…NALP). Residues 181 to 352 (KHWEAELATL…LRDNLAKLLE (172 aa)) adopt a coiled-coil conformation. A required for tetramerization region spans residues 290–354 (KLQEVEIRNK…DNLAKLLERS (65 aa)). Ser-306 is modified (phosphoserine).

Belongs to the Homer family. As to quaternary structure, tetramer; this tetrameric structure is critical for forming the high-order complex with SHANK1, which in turn is necessary for the structural and functional integrity of dendritic spines. Interacts with GRM1, GRM5, ITPR1, DNM3, RYR1, RYR2 and SHANK3. Interacts with IFT57 and OPHN1. Encodes a coiled-coil structure that mediates homo- and heteromultimerization. Interacts with SHANK1; forms high-order polymerized complex with a mesh-like network structure, at least composed of SHANK1, HOMER1 and DLGAP1; the complex formation is SHANK1 multimerization dependent. Interacts with NFATC4. Interacts with DAGLA (via PPXXF motif); this interaction is required for the cell membrane localization of DAGLA. Interacts with SRGAP2.

Its subcellular location is the cytoplasm. It localises to the postsynaptic density. The protein localises to the synapse. It is found in the cell projection. The protein resides in the dendritic spine. Functionally, postsynaptic density scaffolding protein. Binds and cross-links cytoplasmic regions of GRM1, GRM5, ITPR1, DNM3, RYR1, RYR2, SHANK1 and SHANK3. By physically linking GRM1 and GRM5 with ER-associated ITPR1 receptors, it aids the coupling of surface receptors to intracellular calcium release. May also couple GRM1 to PI3 kinase through its interaction with AGAP2. Forms a high-order complex with SHANK1, which in turn is necessary for the structural and functional integrity of dendritic spines. Negatively regulates T cell activation by inhibiting the calcineurin-NFAT pathway. Acts by competing with calcineurin/PPP3CA for NFAT protein binding, hence preventing NFAT activation by PPP3CA. This chain is Homer protein homolog 1, found in Bos taurus (Bovine).